Here is a 366-residue protein sequence, read N- to C-terminus: sn-glycerol-3-phosphate import ATP-binding protein UgpC (366 aa).

One can recognise an ABC transporter domain in the interval 4–235 (VTLRNVRKTY…PASTFVASFI (232 aa)). 37–44 (GPSGCGKS) serves as a coordination point for ATP.

Belongs to the ABC transporter superfamily. sn-glycerol-3-phosphate importer (TC 3.A.1.1.3) family. As to quaternary structure, the complex is composed of two ATP-binding proteins (UgpC), two transmembrane proteins (UgpA and UgpE) and a solute-binding protein (UgpB).

It localises to the cell inner membrane. It carries out the reaction sn-glycerol 3-phosphate(out) + ATP + H2O = sn-glycerol 3-phosphate(in) + ADP + phosphate + H(+). Functionally, part of the ABC transporter complex UgpBAEC involved in sn-glycerol-3-phosphate (G3P) import. Responsible for energy coupling to the transport system. This Rhodopseudomonas palustris (strain BisB18) protein is sn-glycerol-3-phosphate import ATP-binding protein UgpC.